A 242-amino-acid chain; its full sequence is Type III pantothenate kinase (242 aa).

Aspartate 7–lysine 14 lines the ATP pocket. Residues tyrosine 91 and glycine 98–arginine 101 contribute to the substrate site. The Proton acceptor role is filled by aspartate 100. Threonine 121 contacts ATP. Threonine 171 contacts substrate.

This sequence belongs to the type III pantothenate kinase family. Homodimer. NH4(+) is required as a cofactor. K(+) serves as cofactor.

Its subcellular location is the cytoplasm. It carries out the reaction (R)-pantothenate + ATP = (R)-4'-phosphopantothenate + ADP + H(+). It participates in cofactor biosynthesis; coenzyme A biosynthesis; CoA from (R)-pantothenate: step 1/5. Functionally, catalyzes the phosphorylation of pantothenate (Pan), the first step in CoA biosynthesis. The protein is Type III pantothenate kinase of Xylella fastidiosa (strain 9a5c).